A 345-amino-acid chain; its full sequence is 4-hydroxythreonine-4-phosphate dehydrogenase (345 aa).

Residues H148 and T149 each coordinate substrate. A divalent metal cation contacts are provided by H182, H227, and H282. K290, N299, and R308 together coordinate substrate.

Belongs to the PdxA family. Homodimer. Zn(2+) is required as a cofactor. The cofactor is Mg(2+). Co(2+) serves as cofactor.

It is found in the cytoplasm. It catalyses the reaction 4-(phosphooxy)-L-threonine + NAD(+) = 3-amino-2-oxopropyl phosphate + CO2 + NADH. Its pathway is cofactor biosynthesis; pyridoxine 5'-phosphate biosynthesis; pyridoxine 5'-phosphate from D-erythrose 4-phosphate: step 4/5. Its function is as follows. Catalyzes the NAD(P)-dependent oxidation of 4-(phosphooxy)-L-threonine (HTP) into 2-amino-3-oxo-4-(phosphooxy)butyric acid which spontaneously decarboxylates to form 3-amino-2-oxopropyl phosphate (AHAP). The protein is 4-hydroxythreonine-4-phosphate dehydrogenase of Bradyrhizobium diazoefficiens (strain JCM 10833 / BCRC 13528 / IAM 13628 / NBRC 14792 / USDA 110).